The primary structure comprises 264 residues: uncharacterized protein (264 aa).

Composition is skewed to polar residues over residues 1-18, 73-83, and 126-139; these read MFEN…SSRS, SLGSVGTTEVN, and KTTQ…QPVL. 2 disordered regions span residues 1 to 47 and 68 to 264; these read MFEN…WVGS and RKEP…LSFE. Residues 149-171 show a composition bias toward low complexity; the sequence is SSGQPQVSSSAQPSPADASQPEA. Over residues 194-212 the composition is skewed to basic and acidic residues; the sequence is LIHKDGQDDPKLKVTECRR. Phosphoserine is present on residues Ser214, Ser215, Ser241, and Ser250.

This is an uncharacterized protein from Bos taurus (Bovine).